The sequence spans 196 residues: Orotate phosphoribosyltransferase (196 aa).

117-125 (EDIVTTGLS) is a binding site for 5-phospho-alpha-D-ribose 1-diphosphate. Orotate-binding residues include Thr-121 and Arg-149.

Belongs to the purine/pyrimidine phosphoribosyltransferase family. PyrE subfamily. Homodimer. Requires Mg(2+) as cofactor.

The catalysed reaction is orotidine 5'-phosphate + diphosphate = orotate + 5-phospho-alpha-D-ribose 1-diphosphate. Its pathway is pyrimidine metabolism; UMP biosynthesis via de novo pathway; UMP from orotate: step 1/2. In terms of biological role, catalyzes the transfer of a ribosyl phosphate group from 5-phosphoribose 1-diphosphate to orotate, leading to the formation of orotidine monophosphate (OMP). In Methylorubrum extorquens (strain PA1) (Methylobacterium extorquens), this protein is Orotate phosphoribosyltransferase.